Here is a 502-residue protein sequence, read N- to C-terminus: Putative ZDHHC-type palmitoyltransferase 3 (502 aa).

Positions 1–80 (MVNNNNKNNK…ESTNENNKKL (80 aa)) are disordered. The segment covering 10–30 (KINDRENEENEKNKKKDKIYE) has biased composition (basic and acidic residues). The span at 31-52 (NKIGINENNNENNNYQNENFIY) shows a compositional bias: low complexity. Asn-58 carries an N-linked (GlcNAc...) asparagine glycan. Acidic residues predominate over residues 59 to 73 (DTQEGDISEIQEEST). Helical transmembrane passes span 104 to 124 (FFIVTQIFILVPSLFFEIKLV) and 134 to 154 (LEISNYIITLTLLVFIFYNLY). The tract at residues 200 to 281 (IANDDPISSS…NNNNNNNKNQ (82 aa)) is disordered. A compositionally biased stretch (low complexity) spans 203–212 (DDPISSSSDF). Over residues 213 to 222 (SDSDDDDQDE) the composition is skewed to acidic residues. Over residues 248 to 280 (NSNNNNSNNNNNNNKNRNRNNNNNNNNNNNNKN) the composition is skewed to low complexity. 2 N-linked (GlcNAc...) asparagine glycosylation sites follow: Asn-252 and Asn-280. Residues 299-349 (KFCITCGLYREPRSFHCSTCNNCVENFDHHCVWIGNCIGRRNYREFFYFIT) enclose the DHHC domain. Residue Cys-329 is the S-palmitoyl cysteine intermediate of the active site. A helical transmembrane segment spans residues 344 to 364 (FFYFITTTLIYALYLLSMSIV). 3 N-linked (GlcNAc...) asparagine glycosylation sites follow: Asn-371, Asn-388, and Asn-393. Residues 419 to 439 (GLCIFIIIFGFIMSLLLGFLV) traverse the membrane as a helical segment. Residues Asn-449, Asn-483, and Asn-494 are each glycosylated (N-linked (GlcNAc...) asparagine).

Belongs to the DHHC palmitoyltransferase family.

It localises to the membrane. The catalysed reaction is L-cysteinyl-[protein] + hexadecanoyl-CoA = S-hexadecanoyl-L-cysteinyl-[protein] + CoA. The sequence is that of Putative ZDHHC-type palmitoyltransferase 3 from Dictyostelium discoideum (Social amoeba).